Here is a 135-residue protein sequence, read N- to C-terminus: Photosystem II extrinsic protein V (135 aa).

The heme c site is built by Cys37, Cys40, His41, and His92.

This sequence belongs to the cytochrome c family. PsbV subfamily. As to quaternary structure, PSII is composed of 1 copy each of membrane proteins PsbA, PsbB, PsbC, PsbD, PsbE, PsbF, PsbH, PsbI, PsbJ, PsbK, PsbL, PsbM, PsbT, PsbX, PsbY, PsbZ, Psb30/Ycf12, peripheral proteins PsbO, CyanoQ (PsbQ), PsbU, PsbV and a large number of cofactors. It forms dimeric complexes. The cofactor is heme c.

Its subcellular location is the cellular thylakoid membrane. One of the extrinsic, lumenal subunits of photosystem II (PSII). PSII is a light-driven water plastoquinone oxidoreductase, using light energy to abstract electrons from H(2)O, generating a proton gradient subsequently used for ATP formation. The extrinsic proteins stabilize the structure of photosystem II oxygen-evolving complex (OEC), the ion environment of oxygen evolution and protect the OEC against heat-induced inactivation. Low-potential cytochrome c that plays a role in the OEC of PSII. The polypeptide is Photosystem II extrinsic protein V (Microcystis aeruginosa).